A 195-amino-acid polypeptide reads, in one-letter code: Ion-translocating oxidoreductase complex subunit B (195 aa).

Residues 1-3 (MST) are Periplasmic-facing. A helical membrane pass occupies residues 4–24 (IVIAVIALAALAAVFGAILGF). The Cytoplasmic segment spans residues 25-195 (ASIRFKVEAD…SAPAAQKSAN (171 aa)). The 4Fe-4S domain maps to 32-90 (EADPIVDQIDAILPQTQCGQCGYPGCRPYAEAIANGDAINKCPPGGQATIEKLADLMGV). 12 residues coordinate [4Fe-4S] cluster: Cys-49, Cys-52, Cys-57, Cys-73, Cys-114, Cys-117, Cys-120, Cys-124, Cys-144, Cys-147, Cys-150, and Cys-154. 2 4Fe-4S ferredoxin-type domains span residues 105–134 (MVAFIHEDMCIGCTKCIQACPVDAIVGGNK) and 135–164 (AVHTVIKNECTGCDLCVAPCPTDCIEMIPV).

It belongs to the 4Fe4S bacterial-type ferredoxin family. RnfB subfamily. The complex is composed of six subunits: RnfA, RnfB, RnfC, RnfD, RnfE and RnfG. The cofactor is [4Fe-4S] cluster.

It localises to the cell inner membrane. In terms of biological role, part of a membrane-bound complex that couples electron transfer with translocation of ions across the membrane. The polypeptide is Ion-translocating oxidoreductase complex subunit B (Vibrio cholerae serotype O1 (strain ATCC 39541 / Classical Ogawa 395 / O395)).